The sequence spans 324 residues: Cyclin-dependent kinase C-3 (324 aa).

The 294-residue stretch at 27–320 (FRRIRKIGEG…AHDALCAAYF (294 aa)) folds into the Protein kinase domain. ATP-binding positions include 33–41 (IGEGTYGEV) and lysine 56. Threonine 37 carries the phosphothreonine modification. Tyrosine 38 is subject to Phosphotyrosine. Aspartate 160 functions as the Proton acceptor in the catalytic mechanism. A Phosphothreonine modification is found at threonine 193.

The protein belongs to the protein kinase superfamily. CMGC Ser/Thr protein kinase family. CDC2/CDKX subfamily.

It catalyses the reaction L-seryl-[protein] + ATP = O-phospho-L-seryl-[protein] + ADP + H(+). It carries out the reaction L-threonyl-[protein] + ATP = O-phospho-L-threonyl-[protein] + ADP + H(+). The catalysed reaction is [DNA-directed RNA polymerase] + ATP = phospho-[DNA-directed RNA polymerase] + ADP + H(+). The sequence is that of Cyclin-dependent kinase C-3 (CDKC-1) from Oryza sativa subsp. japonica (Rice).